The chain runs to 309 residues: Aromatic prenyltransferase (309 aa).

This sequence belongs to the aromatic prenyltransferase family.

In terms of biological role, prenyltransferase that attaches isoprenoid moieties to carbon atoms of aromatic substrates in an enzyme-catalyzed Friedel-Crafts reaction. Shows specificity for dimethylallyl diphosphate (DMAPP) and does not accept geranyl diphosphate (GPP) or isopentenyl diphosphate (IPP). Prenylates the artificial substrate 2,7-dihydroxynaphthalene (2,7-DHN), as well as dihydrophenazine-1-carboxylic acid and 4-hydroxybenzoic acid at lower levels. Only traces of products are detected with aspulvinone E or flaviolin as substrates; and no product is formed with L-tryptophan, L-tyrosine, or 4-hydroxyphenylpyruvate. Ptf seems no to be involved in the prenylation reaction in the biosynthesis of aspulvinone H and J and the physiological function of ptf remains unknown. The chain is Aromatic prenyltransferase from Sclerotinia sclerotiorum (strain ATCC 18683 / 1980 / Ss-1) (White mold).